The following is a 546-amino-acid chain: ATP synthase subunit alpha (546 aa).

Gly172–Thr179 provides a ligand contact to ATP.

The protein belongs to the ATPase alpha/beta chains family. F-type ATPases have 2 components, CF(1) - the catalytic core - and CF(0) - the membrane proton channel. CF(1) has five subunits: alpha(3), beta(3), gamma(1), delta(1), epsilon(1). CF(0) has three main subunits: a(1), b(2) and c(9-12). The alpha and beta chains form an alternating ring which encloses part of the gamma chain. CF(1) is attached to CF(0) by a central stalk formed by the gamma and epsilon chains, while a peripheral stalk is formed by the delta and b chains.

The protein localises to the cell membrane. It carries out the reaction ATP + H2O + 4 H(+)(in) = ADP + phosphate + 5 H(+)(out). In terms of biological role, produces ATP from ADP in the presence of a proton gradient across the membrane. The alpha chain is a regulatory subunit. This Corynebacterium efficiens (strain DSM 44549 / YS-314 / AJ 12310 / JCM 11189 / NBRC 100395) protein is ATP synthase subunit alpha.